The following is a 168-amino-acid chain: Lipoprotein signal peptidase (168 aa).

A run of 3 helical transmembrane segments spans residues 8 to 28, 61 to 81, and 91 to 111; these read LYYL…WLVV, GQFW…VIYI, and FGIA…DRIF. Active-site residues include Asp117 and Asp135. The chain crosses the membrane as a helical span at residues 128 to 148; it reads FPIFNVADAALTIGVALMFIY.

Belongs to the peptidase A8 family.

Its subcellular location is the cell membrane. The catalysed reaction is Release of signal peptides from bacterial membrane prolipoproteins. Hydrolyzes -Xaa-Yaa-Zaa-|-(S,diacylglyceryl)Cys-, in which Xaa is hydrophobic (preferably Leu), and Yaa (Ala or Ser) and Zaa (Gly or Ala) have small, neutral side chains.. It participates in protein modification; lipoprotein biosynthesis (signal peptide cleavage). This protein specifically catalyzes the removal of signal peptides from prolipoproteins. The chain is Lipoprotein signal peptidase from Anoxybacillus flavithermus (strain DSM 21510 / WK1).